The following is an 83-amino-acid chain: Putative regulatory protein FMG_0656 (83 aa).

The protein belongs to the RemA family.

This chain is Putative regulatory protein FMG_0656, found in Finegoldia magna (strain ATCC 29328 / DSM 20472 / WAL 2508) (Peptostreptococcus magnus).